Consider the following 342-residue polypeptide: S-adenosylmethionine:tRNA ribosyltransferase-isomerase (342 aa).

This sequence belongs to the QueA family. Monomer.

The protein resides in the cytoplasm. The catalysed reaction is 7-aminomethyl-7-carbaguanosine(34) in tRNA + S-adenosyl-L-methionine = epoxyqueuosine(34) in tRNA + adenine + L-methionine + 2 H(+). It participates in tRNA modification; tRNA-queuosine biosynthesis. In terms of biological role, transfers and isomerizes the ribose moiety from AdoMet to the 7-aminomethyl group of 7-deazaguanine (preQ1-tRNA) to give epoxyqueuosine (oQ-tRNA). The protein is S-adenosylmethionine:tRNA ribosyltransferase-isomerase of Campylobacter jejuni subsp. jejuni serotype O:2 (strain ATCC 700819 / NCTC 11168).